The sequence spans 95 residues: Co-chaperonin GroES (95 aa).

The protein belongs to the GroES chaperonin family. Heptamer of 7 subunits arranged in a ring. Interacts with the chaperonin GroEL.

It localises to the cytoplasm. Its function is as follows. Together with the chaperonin GroEL, plays an essential role in assisting protein folding. The GroEL-GroES system forms a nano-cage that allows encapsulation of the non-native substrate proteins and provides a physical environment optimized to promote and accelerate protein folding. GroES binds to the apical surface of the GroEL ring, thereby capping the opening of the GroEL channel. This chain is Co-chaperonin GroES, found in Streptococcus mutans serotype c (strain ATCC 700610 / UA159).